Consider the following 303-residue polypeptide: Sterol-4-alpha-carboxylate 3-dehydrogenase ERG26, decarboxylating (303 aa).

NADP(+)-binding positions include 8–9 and 30–32; these read SL and TAS. Ser-71 is a binding site for substrate. Positions 77–96 are disordered; sequence PTQEPTSEENAHRYDENNAP. NADP(+) is bound by residues Tyr-102, Lys-106, and 128–131; that span reads IPGI. Residue Tyr-102 coordinates substrate. Lys-106 functions as the Proton donor in the catalytic mechanism.

The protein belongs to the 3-beta-HSD family. As to quaternary structure, heterotetramer of ERG25, ERG26, ERG27 and ERG28. ERG28 acts as a scaffold to tether ERG27 and other 4,4-demethylation-related enzymes, forming a demethylation enzyme complex, in the endoplasmic reticulum.

It localises to the endoplasmic reticulum membrane. Its pathway is steroid metabolism; ergosterol biosynthesis. Its function is as follows. Sterol-4-alpha-carboxylate 3-dehydrogenase; part of the third module of ergosterol biosynthesis pathway that includes the late steps of the pathway. ERG26 is a catalytic component of the C-4 demethylation complex that catalyzes the conversion of 4,4-dimethylfecosterol into fecosterol via 4-methylfecosterol. The third module or late pathway involves the ergosterol synthesis itself through consecutive reactions that mainly occur in the endoplasmic reticulum (ER) membrane. Firstly, the squalene synthase ERG9 catalyzes the condensation of 2 farnesyl pyrophosphate moieties to form squalene, which is the precursor of all steroids. Squalene synthase is crucial for balancing the incorporation of farnesyl diphosphate (FPP) into sterol and nonsterol isoprene synthesis. Secondly, squalene is converted into lanosterol by the consecutive action of the squalene epoxidase ERG1 and the lanosterol synthase ERG7. Then, the delta(24)-sterol C-methyltransferase ERG6 methylates lanosterol at C-24 to produce eburicol. Eburicol is the substrate of the sterol 14-alpha demethylase encoded by CYP51A, CYP51B and CYP51C, to yield 4,4,24-trimethyl ergosta-8,14,24(28)-trienol. CYP51B encodes the enzyme primarily responsible for sterol 14-alpha-demethylation, and plays an essential role in ascospore formation. CYP51A encodes an additional sterol 14-alpha-demethylase, induced on ergosterol depletion and responsible for the intrinsic variation in azole sensitivity. The third CYP51 isoform, CYP51C, does not encode a sterol 14-alpha-demethylase, but is required for full virulence on host wheat ears. The C-14 reductase ERG24 then reduces the C14=C15 double bond which leads to 4,4-dimethylfecosterol. A sequence of further demethylations at C-4, involving the C-4 demethylation complex containing the C-4 methylsterol oxidases ERG25, the sterol-4-alpha-carboxylate 3-dehydrogenase ERG26 and the 3-keto-steroid reductase ERG27, leads to the production of fecosterol via 4-methylfecosterol. ERG28 has a role as a scaffold to help anchor ERG25, ERG26 and ERG27 to the endoplasmic reticulum. The C-8 sterol isomerase ERG2 then catalyzes the reaction which results in unsaturation at C-7 in the B ring of sterols and thus converts fecosterol to episterol. The sterol-C5-desaturases ERG3A and ERG3BB then catalyze the introduction of a C-5 double bond in the B ring to produce 5-dehydroepisterol. The C-22 sterol desaturases ERG5A and ERG5B further convert 5-dehydroepisterol into ergosta-5,7,22,24(28)-tetraen-3beta-ol by forming the C-22(23) double bond in the sterol side chain. Finally, ergosta-5,7,22,24(28)-tetraen-3beta-ol is substrate of the C-24(28) sterol reductase ERG4 to produce ergosterol. This chain is Sterol-4-alpha-carboxylate 3-dehydrogenase ERG26, decarboxylating, found in Gibberella zeae (strain ATCC MYA-4620 / CBS 123657 / FGSC 9075 / NRRL 31084 / PH-1) (Wheat head blight fungus).